The sequence spans 1680 residues: Alpha-protein kinase 3 (1680 aa).

The disordered stretch occupies residues 1–37 (MGSRRAAGRGWGLGGRAGAGGDSEDDGPVWTPGPASR). The span at 9–21 (RGWGLGGRAGAGG) shows a compositional bias: gly residues. The Ig-like 1 domain maps to 77-173 (PLFETTLKSR…SGVLEVGTMT (97 aa)). Ser-229 is modified (phosphoserine). 5 disordered regions span residues 237 to 288 (STPV…NGED), 302 to 759 (ELGP…CPRE), 785 to 950 (SEEA…GTRS), 1078 to 1128 (EGSA…LTGL), and 1147 to 1244 (PKVR…QRKA). Positions 320–337 (KDEESKPGEQKLELEKAE) are enriched in basic and acidic residues. The segment covering 339–353 (SQCSSENVVPSTDKP) has biased composition (polar residues). Pro residues predominate over residues 402-426 (APAPAPVPAPALAPAPVPVPAPTPV). Low complexity predominate over residues 514–532 (ESTTTSLSSQTSESMAQSL). Composition is skewed to polar residues over residues 557–566 (SPLQGQTSHK) and 731–744 (ETQS…SLSS). Residues 785–796 (SEEAAFRSHEDG) are compositionally biased toward basic and acidic residues. A compositionally biased stretch (polar residues) spans 917 to 932 (SPTQSHPPEAMATSSE). Composition is skewed to basic and acidic residues over residues 1087–1111 (ERTS…ESRT) and 1151–1165 (AGSD…ERES). Position 1199 is a phosphoserine (Ser-1199). Positions 1231-1244 (DEGKQEALAKQRKA) are enriched in basic and acidic residues. Positions 1251–1339 (PQVIRKIRVE…GSASTDFCLS (89 aa)) constitute an Ig-like 2 domain. A disulfide bridge connects residues Cys-1273 and Cys-1323. An Alpha-type protein kinase domain is found at 1367–1600 (KGLADSGCWG…YCDMLGLKPL (234 aa)). Residues 1603-1680 (PEAAHPQAKA…DGSSKAQSMR (78 aa)) form a disordered region. Polar residues-rich tracts occupy residues 1639–1660 (PQGS…QAAT) and 1671–1680 (DGSSKAQSMR).

Belongs to the protein kinase superfamily. Alpha-type protein kinase family. ALPK subfamily. As to expression, expressed in the heart and skeletal muscle of adult mice.

The protein resides in the nucleus. It carries out the reaction L-seryl-[protein] + ATP = O-phospho-L-seryl-[protein] + ADP + H(+). The enzyme catalyses L-threonyl-[protein] + ATP = O-phospho-L-threonyl-[protein] + ADP + H(+). In terms of biological role, involved in cardiomyocyte differentiation. The sequence is that of Alpha-protein kinase 3 from Mus musculus (Mouse).